The following is a 510-amino-acid chain: Anaerobic nitric oxide reductase transcription regulator NorR (510 aa).

In terms of domain architecture, Sigma-54 factor interaction spans 188–417 (IIGNSQGMRT…LEHVIKRAAV (230 aa)). Residues 216–223 (GETGVGKE) and 279–288 (ADGGTLFLDE) contribute to the ATP site. The segment at residues 486–505 (WAATARQLELDSGNLHRLAK) is a DNA-binding region (H-T-H motif).

It functions in the pathway nitrogen metabolism; nitric oxide reduction. Its function is as follows. Required for the expression of anaerobic nitric oxide (NO) reductase, acts as a transcriptional activator for at least the norVW operon. Activation also requires sigma-54. The polypeptide is Anaerobic nitric oxide reductase transcription regulator NorR (Vibrio vulnificus (strain YJ016)).